The sequence spans 902 residues: HTH-type transcriptional regulator MalT (902 aa).

39 to 46 (SPAGYGKT) lines the ATP pocket. Residues 832–897 (ELVRTSPLTQ…EAIVTAENLL (66 aa)) form the HTH luxR-type domain. Residues 856–875 (NEQIAQELDVAGTTIKTHIR) constitute a DNA-binding region (H-T-H motif).

It belongs to the MalT family. Monomer in solution. Oligomerizes to an active state in the presence of the positive effectors ATP and maltotriose.

Activated by ATP and maltotriose, which are both required for DNA binding. Positively regulates the transcription of the maltose regulon whose gene products are responsible for uptake and catabolism of malto-oligosaccharides. Specifically binds to the promoter region of its target genes, recognizing a short DNA motif called the MalT box. The sequence is that of HTH-type transcriptional regulator MalT from Vibrio campbellii (strain ATCC BAA-1116).